A 1071-amino-acid chain; its full sequence is SLIT-ROBO Rho GTPase-activating protein 2 (1071 aa).

Residues K22–D325 form the F-BAR domain. The segment covering L181–T203 has biased composition (basic and acidic residues). Residues L181–A211 form a disordered region. Residue S206 is modified to Phosphoserine. Positions Q363–I401 form a coiled coil. S427, S500, S691, S695, and S724 each carry phosphoserine. A Rho-GAP domain is found at A489–F679. A disordered region spans residues T703–D726. An SH3 domain is found at C728 to T787. 2 disordered regions span residues R794–C820 and N835–P936. At S795 the chain carries Phosphoserine. Composition is skewed to polar residues over residues L857–P867, R874–L885, and G897–H907. The residue at position 916 (S916) is a Phosphoserine. Positions I919–N933 are enriched in polar residues. A Symmetric dimethylarginine; by PRMT5 modification is found at R927. A Phosphoserine modification is found at S930. Residues E940 to H968 adopt a coiled-coil conformation. The segment at S983–A1012 is disordered. Phosphoserine occurs at positions 990, 994, 1013, and 1027. A disordered region spans residues K1029–V1071. Positions P1047–V1071 are enriched in polar residues.

In terms of assembly, homodimer. Forms a heterooligomer with SRGAP1 and SRGAP3 through its F-BAR domain. Interacts (via SH3 domain) with GPHN. Interacts (via SH3 domain) with FMNL1 (activated by RAC1); regulates the actin filament severing activity of FMNL1 and actin dynamics. Interacts (via SH3 domain) with FMNL3. Interacts with RAC1; specifically stimulates RAC1 GTPase activity. Interacts (via F-BAR domain) with HOMER1. Interacts with ROBO1 and ROBO2. Interacts with FASLG. Interacts with PRMT5. Post-translationally, methylation at Arg-927 is required for the stimulation of cell migration, dimerization and localization at the plasma membrane protrusions.

It localises to the cell membrane. Its subcellular location is the cell projection. It is found in the dendritic spine. The protein localises to the postsynaptic density. The protein resides in the postsynaptic cell membrane. It localises to the lamellipodium. Its subcellular location is the cytoplasmic vesicle. It is found in the phagosome. The protein localises to the nucleus. The protein resides in the cytoplasm. It localises to the cytosol. Functionally, postsynaptic RAC1 GTPase activating protein (GAP) that plays a key role in neuronal morphogenesis and migration mainly during development of the cerebral cortex. Regulates excitatory and inhibitory synapse maturation and density in cortical pyramidal neurons. SRGAP2/SRGAP2A limits excitatory and inhibitory synapse density through its RAC1-specific GTPase activating activity, while it promotes maturation of both excitatory and inhibitory synapses through its ability to bind to the postsynaptic scaffolding protein HOMER1 at excitatory synapses, and the postsynaptic protein GPHN at inhibitory synapses. Mechanistically, acts by binding and deforming membranes, thereby regulating actin dynamics to regulate cell migration and differentiation. Promotes cell repulsion and contact inhibition of locomotion: localizes to protrusions with curved edges and controls the duration of RAC1 activity in contact protrusions. In non-neuronal cells, may also play a role in cell migration by regulating the formation of lamellipodia and filopodia. The sequence is that of SLIT-ROBO Rho GTPase-activating protein 2 from Rattus norvegicus (Rat).